The primary structure comprises 1347 residues: MDLLSGTYIFAVLLACVVFHSGAQEKNYTIREEMPENVLIGDLLKDLNLSLIPNKSLTTAMQFKLVYKTGDVPLIRIEEDTGEIFTTGARIDREKLCAGIPRDEHCFYEVEVAILPDEIFRLVKIRFLIEDINDNAPLFPATVINISIPENSAINSKYTLPAAVDPDVGTNGVQNYELIKSQNIFGLDVIETPEGDKMPQLIVQKELDREEKDTYVMKVKVEDGGFPQRSSTAILQVSVTDTNDNHPVFKETEIEVSIPENAPVGTSVTQLHATDADIGENAKIHFSFSNLVSNIARRLFHLNATTGLITIKEPLDREETPNHKLLVLASDGGLMPARAMVLVNVTDVNDNVPSIDIRYIVNPVNDTVVLSENIPLNTKIALITVTDKDADHNGRVTCFTDHEIPFRLRPVFSNQFLLETAAYLDYESTKEYAIKLLAADAGKPPLNQSAMLFIKVKDENDNAPVFTQSFVTVSIPENNSPGIQLTKVSATDADSGPNAEINYLLGPDAPPEFSLDRRTGMLTVVKKLDREKEDKYLFTILAKDNGVPPLTSNVTVFVSIIDQNDNSPVFTHNEYNFYVPENLPRHGTVGLITVTDPDYGDNSAVTLSILDENDDFTIDSQTGVIRPNISFDREKQESYTFYVKAEDGGRVSRSSSAKVTINVVDVNDNKPVFIVPPSNYSYELVLPSTNPGTVVFQVMAVDNDTGMNAEVRYSIVGGNTRDLFAIDQETGNITLMEKCDVTDLGLHRVLVKANDLGQPDSLFSVVIVNLFVNESVTNATLINELVRKSTEAPVTPNTEIADVSSPTSDYVKILVAAVAGTITVVVVIFITAVVRCRQAPHLKAAQKNKQNSEWATPNPENRQMIMMKKRKKKKKHSPKNLLLNFVTIEETKADDVDSDGNRVTLDLPIDLEEQTMGKYNWVTTPTTFKPDSPDLARHYKSASPQPAFQIQPETPLNSKHHIIQELPLDNTFVACDSISKCSSSSSDPYSVSDCGYPVTTFEVPVSVHTRPPMKEVVRSCTPMKESTTMEIWIHPQPQRKSEGKVAGKSQRRVTFHLPEGSQESSSDGGLGDHDAGSLTSTSHGLPLGYPQEEYFDRATPSNRTEGDGNSDPESTFIPGLKKAAEITVQPTVEEASDNCTQECLIYGHSDACWMPASLDHSSSSQAQASALCHSPPLSQASTQHHSPPVTQTIALCHSPPVTQTIALCHSPPPIQVSALHHSPPLVQATALHHSPPSAQASALCYSPPLAQAAAISHSSPLPQVIALHRSQAQSSVSLQQGWVQGADGLCSVDQGVQGSATSQFYTVSERLHPSDDSIKVIPLTTFTPRQQARPSRGDSPVMEEHPL.

The signal sequence occupies residues 1-23 (MDLLSGTYIFAVLLACVVFHSGA). The Extracellular segment spans residues 24–812 (QEKNYTIREE…VSSPTSDYVK (789 aa)). 7 consecutive Cadherin domains span residues 26–139 (KNYT…APLF), 140–249 (PATV…HPVF), 250–355 (KETE…VPSI), 362–466 (NPVN…APVF), 467–570 (TQSF…SPVF), 571–673 (THNE…KPVF), and 677–795 (PSNY…APVT). 3 N-linked (GlcNAc...) asparagine glycosylation sites follow: N27, N48, and N54. A glycan (N-linked (GlcNAc...) asparagine) is linked at N344. The N-linked (GlcNAc...) asparagine glycan is linked to N553. A glycan (N-linked (GlcNAc...) asparagine) is linked at N773. A helical transmembrane segment spans residues 813-833 (ILVAAVAGTITVVVVIFITAV). Residues 834–1347 (VRCRQAPHLK…DSPVMEEHPL (514 aa)) lie on the Cytoplasmic side of the membrane. Disordered stretches follow at residues 1057–1091 (LPEG…GYPQ), 1097–1116 (RATP…ESTF), and 1325–1347 (TFTP…EHPL).

It localises to the cell membrane. Its function is as follows. Potential calcium-dependent cell-adhesion protein. This Pan paniscus (Pygmy chimpanzee) protein is Protocadherin-11 X-linked (PCDH11X).